A 596-amino-acid polypeptide reads, in one-letter code: Two-component response regulator ARR12 (596 aa).

The 116-residue stretch at 18–133 (RVLAVDDDQT…ELKNIWQHVV (116 aa)) folds into the Response regulatory domain. Asp-69 is subject to 4-aspartylphosphate. A compositionally biased stretch (basic and acidic residues) spans 138–153 (DKNRGSNNNGDKRDGS). Residues 138-192 (DKNRGSNNNGDKRDGSGNEGVGNSDQNNGKGNRKRKDQYNEDEDEDRDDNDDSCA) are disordered. Positions 158-167 (VGNSDQNNGK) are enriched in polar residues. Residues 177-189 (NEDEDEDRDDNDD) are compositionally biased toward acidic residues. The Nuclear localization signal signature appears at 194 to 197 (KKQR). Positions 197–247 (RVVWTVELHKKFVAAVNQLGYEKAMPKKILDLMNVEKLTRENVASHLQKFR) form a DNA-binding region, myb-like GARP. The segment at 437 to 467 (NAVSSSTHPPPPAHNSNSINHQFDVSPLPHS) is disordered. The segment covering 450–459 (HNSNSINHQF) has biased composition (polar residues).

The protein belongs to the ARR family. Type-B subfamily. As to quaternary structure, binds the target DNA as a monomer. Two-component system major event consists of a His-to-Asp phosphorelay between a sensor histidine kinase (HK) and a response regulator (RR). In plants, the His-to-Asp phosphorelay involves an additional intermediate named Histidine-containing phosphotransfer protein (HPt). This multistep phosphorelay consists of a His-Asp-His-Asp sequential transfer of a phosphate group between first a His and an Asp of the HK protein, followed by the transfer to a conserved His of the HPt protein and finally the transfer to an Asp in the receiver domain of the RR protein. As to expression, detected in the whole plant. Predominantly expressed in leaves. Expressed at the root transition zone.

It localises to the nucleus. Functionally, transcriptional activator that binds specifically to the DNA sequence 5'-[AG]GATT-3'. Functions as a response regulator involved in His-to-Asp phosphorelay signal transduction system. Phosphorylation of the Asp residue in the receiver domain activates the ability of the protein to promote the transcription of target genes. Could directly activate some type-A response regulators in response to cytokinins. Involved in the root-meristem size determination through the regulation of cell differentiation. Involved in activating SHY2 during meristem growth and controls PIN expression via activation of SHY2. The protein is Two-component response regulator ARR12 (ARR12) of Arabidopsis thaliana (Mouse-ear cress).